A 225-amino-acid polypeptide reads, in one-letter code: Transmembrane protein C16orf54 homolog (225 aa).

The chain crosses the membrane as a helical span at residues 32-52 (PCIPIMLGLASLTAFFIITTA). 2 disordered regions span residues 106–163 (DRAP…ERPH) and 178–200 (EAGL…EPDW). A phosphothreonine mark is found at threonine 113 and threonine 117. Residues 122–140 (ATAPPATSAPYSSLSSLVP) are compositionally biased toward low complexity. Position 195 is a phosphoserine (serine 195).

The protein resides in the membrane. In Mus musculus (Mouse), this protein is Transmembrane protein C16orf54 homolog.